Reading from the N-terminus, the 1385-residue chain is Pesticidal crystal protein Cry5Aa (1385 aa).

Disordered regions lie at residues 768-799 and 1359-1385; these read NITV…GQYN and PLPT…NNNQ. Residues 782 to 796 are compositionally biased toward gly residues; the sequence is NGGGDGGGNGGGDGG. Residues 1370–1385 are compositionally biased toward low complexity; that stretch reads NTASSTNSDTSMNNNQ.

This sequence belongs to the delta endotoxin family.

Functionally, endotoxin with nematicidal activity. The protein is Pesticidal crystal protein Cry5Aa (cry5Aa) of Bacillus thuringiensis subsp. darmstadiensis.